The following is a 564-amino-acid chain: Phomacin cluster regulator phmR (564 aa).

Positions 33 to 64 (CDRCRGHKLRCIRDQMTVDSPCQRCRKAREKC) form a DNA-binding region, zn(2)-C6 fungal-type. Disordered regions lie at residues 68-93 (SSTR…TSSA), 152-197 (DFAD…NPFL), and 252-278 (PIHP…DSTT). 2 stretches are compositionally biased toward polar residues: residues 182 to 192 (ITPTSQGTTAV) and 258 to 278 (MASS…DSTT).

It localises to the nucleus. Transcription factor that specifically regulates the expression of the gene cluster that mediates the biosynthesis of the mycotoxins phomacins, leucine-derived cytochalasans with potent actin polymerization-inhibitory activities and monocot-specific antigerminative activities. This Phaeosphaeria nodorum (strain SN15 / ATCC MYA-4574 / FGSC 10173) (Glume blotch fungus) protein is Phomacin cluster regulator phmR.